The following is a 265-amino-acid chain: Translation initiation factor 2 subunit alpha (265 aa).

The S1 motif domain maps to 12–83; it reads GELIIGTVYK…KKGHVDASLK (72 aa).

It belongs to the eIF-2-alpha family. Heterotrimer composed of an alpha, a beta and a gamma chain.

In terms of biological role, eIF-2 functions in the early steps of protein synthesis by forming a ternary complex with GTP and initiator tRNA. This Methanobrevibacter smithii (strain ATCC 35061 / DSM 861 / OCM 144 / PS) protein is Translation initiation factor 2 subunit alpha.